The following is a 148-amino-acid chain: Deoxyuridine 5'-triphosphate nucleotidohydrolase (148 aa).

Substrate is bound by residues 68–70 (RSG), N81, and 85–87 (TID).

Belongs to the dUTPase family. Mg(2+) is required as a cofactor.

It carries out the reaction dUTP + H2O = dUMP + diphosphate + H(+). Its pathway is pyrimidine metabolism; dUMP biosynthesis; dUMP from dCTP (dUTP route): step 2/2. This enzyme is involved in nucleotide metabolism: it produces dUMP, the immediate precursor of thymidine nucleotides and it decreases the intracellular concentration of dUTP so that uracil cannot be incorporated into DNA. This is Deoxyuridine 5'-triphosphate nucleotidohydrolase from Geobacter metallireducens (strain ATCC 53774 / DSM 7210 / GS-15).